The sequence spans 461 residues: A-type ATP synthase subunit B (461 aa).

It belongs to the ATPase alpha/beta chains family. As to quaternary structure, has multiple subunits with at least A(3), B(3), C, D, E, F, H, I and proteolipid K(x).

It localises to the cell membrane. Its function is as follows. Component of the A-type ATP synthase that produces ATP from ADP in the presence of a proton gradient across the membrane. The B chain is a regulatory subunit. This is A-type ATP synthase subunit B from Methanoculleus marisnigri (strain ATCC 35101 / DSM 1498 / JR1).